We begin with the raw amino-acid sequence, 664 residues long: DNA-directed DNA polymerase (664 aa).

The interval 352-378 is disordered; it reads RRQKDDESDGTAGAAYGRLSSEHPNLQ.

Belongs to the DNA polymerase type-A family. DpoZ subfamily.

The enzyme catalyses DNA(n) + a 2'-deoxyribonucleoside 5'-triphosphate = DNA(n+1) + diphosphate. DNA polymerase that replicates the viral genomic DNA. Also incorporates 5-hydroxymethyl-2'-deoxyuridine (5-hmdU) instead of dTMP into DNA during replication, as an early step in the pathway of thymidine hypermodifications of the viral genome. As a final result of the pathway of hypermodification, 5-aminoethyl-2'-deoxyuridine (5-NedU) substitutes for about 30% of thymidines in the viral DNA. These modifications probably prevent degradation of viral genome by the host restriction-modification antiviral defense system. This is DNA-directed DNA polymerase (gp62) from Pseudomonas phage M6.